Here is a 795-residue protein sequence, read N- to C-terminus: Protocadherin beta-5 (795 aa).

Positions 1–30 (METALAKTPQKRQVMFLAILLLLWEAGSEA) are cleaved as a signal peptide. Residues 31-689 (VRYSIPEETE…AQADSLTVYL (659 aa)) lie on the Extracellular side of the membrane. Cadherin domains lie at 35 to 133 (IPEE…APEF), 138 to 242 (MLLK…APEF), 247 to 346 (YEVQ…APEL), 351 to 450 (LSSP…APAF), and 455 to 560 (YTLF…SPFV). A glycan (N-linked (GlcNAc...) asparagine) is linked at asparagine 169. Lysine 296 is subject to N6-acetyllysine. Residues asparagine 417 and asparagine 435 are each glycosylated (N-linked (GlcNAc...) asparagine). Asparagine 566 is a glycosylation site (N-linked (GlcNAc...) asparagine). The Cadherin 6 domain occupies 567 to 670 (GSAPCTELVP…LVDGFSQPYL (104 aa)). Residues 690–710 (VVALASVSSLFLFSVLLFVAV) traverse the membrane as a helical segment. Residues 711–795 (RLCRRSRAAP…AAFRNSFGLN (85 aa)) lie on the Cytoplasmic side of the membrane.

The protein resides in the cell membrane. Functionally, potential calcium-dependent cell-adhesion protein. May be involved in the establishment and maintenance of specific neuronal connections in the brain. The chain is Protocadherin beta-5 (PCDHB5) from Homo sapiens (Human).